The sequence spans 50 residues: Small ribosomal subunit protein uS14 (50 aa).

4 residues coordinate Zn(2+): cysteine 15, cysteine 18, cysteine 33, and cysteine 36.

This sequence belongs to the universal ribosomal protein uS14 family. Zinc-binding uS14 subfamily. As to quaternary structure, part of the 30S ribosomal subunit. The cofactor is Zn(2+).

Binds 16S rRNA, required for the assembly of 30S particles. In Methanosarcina acetivorans (strain ATCC 35395 / DSM 2834 / JCM 12185 / C2A), this protein is Small ribosomal subunit protein uS14.